The following is a 741-amino-acid chain: Catalase-peroxidase 2 (741 aa).

A signal peptide spans 1–28 (MQKKRVGKSVVAALAIIAMSAGTVAAWA). A cross-link (tryptophyl-tyrosyl-methioninium (Trp-Tyr) (with M-254)) is located at residues 107-228 (WHGAGTYRTY…LAATQMGLIY (122 aa)). The active-site Proton acceptor is the His-108. Positions 228 to 254 (YVNPEGPNGNPDPVAAAKDIRDAFGRM) form a cross-link, tryptophyl-tyrosyl-methioninium (Tyr-Met) (with W-107). Residue His-269 coordinates heme b.

This sequence belongs to the peroxidase family. Peroxidase/catalase subfamily. Homodimer or homotetramer. It depends on heme b as a cofactor. Formation of the three residue Trp-Tyr-Met cross-link is important for the catalase, but not the peroxidase activity of the enzyme.

It carries out the reaction H2O2 + AH2 = A + 2 H2O. The enzyme catalyses 2 H2O2 = O2 + 2 H2O. Its function is as follows. Bifunctional enzyme with both catalase and broad-spectrum peroxidase activity. This Burkholderia ambifaria (strain ATCC BAA-244 / DSM 16087 / CCUG 44356 / LMG 19182 / AMMD) (Burkholderia cepacia (strain AMMD)) protein is Catalase-peroxidase 2.